Reading from the N-terminus, the 239-residue chain is MTKESIPKELLKLITGEEIMMFQELRIRIQELNYKTNLTRLIEGDDYWISQVYDSLWTFKENSKKIFDNKKFIDIGSGCGFPGFAYAITHPNSEIYLVDSSKKKTDSLKEIIKRMNFKNNIFVINDRIENVGRQSSFKKSFNIATARAVSNPSTVAEYILPMLEQNGLGILYCGKWRNEDNKNLENTLNVLEGKIMEIKSKSLPKEKGIRNVIFIKPKASCPDIFPRSIGKAEKYPLKG.

Residues Gly76, Phe81, 99–101 (DSS), 128–129 (IE), and Arg147 each bind S-adenosyl-L-methionine.

It belongs to the methyltransferase superfamily. RNA methyltransferase RsmG family.

The protein resides in the cytoplasm. Its function is as follows. Specifically methylates the N7 position of a guanine in 16S rRNA. The sequence is that of Ribosomal RNA small subunit methyltransferase G from Prochlorococcus marinus (strain MIT 9515).